We begin with the raw amino-acid sequence, 104 residues long: Probable guanidinium efflux system subunit GdnD (104 aa).

A run of 4 helical transmembrane segments spans residues 3-23, 31-51, 58-78, and 84-104; these read WICL…MNQF, WIFL…LAME, AYAV…ILFY, and GKRI…KLIS.

It belongs to the drug/metabolite transporter (DMT) superfamily. Small multidrug resistance (SMR) (TC 2.A.7.1) family. YkkC/YkkD subfamily. As to quaternary structure, the efflux pump is composed of GdnC and GdnD.

Its subcellular location is the cell membrane. Its function is as follows. Probably involved in guanidinium transport. This is Probable guanidinium efflux system subunit GdnD from Bacillus licheniformis (strain ATCC 14580 / DSM 13 / JCM 2505 / CCUG 7422 / NBRC 12200 / NCIMB 9375 / NCTC 10341 / NRRL NRS-1264 / Gibson 46).